A 494-amino-acid chain; its full sequence is MSVLLETSAGDIVIDLLVDYAPKMCENFLKLCKVKYYNFSPIHSIQKSFSFQTGDPLGPLSSESDGGQSIWGLLSGDPSEKTFPALFHPKLKHLERGTVSMATVPHPSDPDTRLAGSQFIVTLGDNTDYLDGKAAIFGKVVEGFDVLEKINDAIVDERGHPLVDIRIKHTVILDDPYPDPAGMREPSASPPPSKAQLATVRITEGEELLDVEASEEAAAEAERRRREREAAAQALTLEMMGDLPFAEVKPPENVLFVCKLNPVTTDEDLELIFSRFGKILSCEVIRDQKTGDSLQYAFIEFEDKKSCEEAYSKMDSVLIDDRRIHVDFSQSVSKLSDVWRSETNSKRKSAARRGGGGWGGVDELEKWRKYRDEDVEWRNDDSYQMVHGVEDLKGRHDGDKPPVRDSRPDVGGGRDRSTSRRSRSPRRDRDRRDDRDNRRGPRDADRRRDDRDLDRRDRRGDRSRDRYRDRDYNDRDHRRGRDRDNRGRDDYRRR.

One can recognise a PPIase cyclophilin-type domain in the interval 1–172 (MSVLLETSAG…VDIRIKHTVI (172 aa)). The segment at 176 to 196 (PYPDPAGMREPSASPPPSKAQ) is disordered. Residues 206 to 240 (EELLDVEASEEAAAEAERRRREREAAAQALTLEMM) are a coiled coil. Residues 253–331 (NVLFVCKLNP…RRIHVDFSQS (79 aa)) enclose the RRM domain. 2 stretches are compositionally biased toward basic and acidic residues: residues 391 to 418 (DLKG…DRST) and 425 to 494 (PRRD…YRRR). A disordered region spans residues 391-494 (DLKGRHDGDK…NRGRDDYRRR (104 aa)).

This sequence belongs to the cyclophilin-type PPIase family. PPIL4 subfamily.

It is found in the nucleus. The enzyme catalyses [protein]-peptidylproline (omega=180) = [protein]-peptidylproline (omega=0). Functionally, PPIases accelerate the folding of proteins. It catalyzes the cis-trans isomerization of proline imidic peptide bonds in oligopeptides. The chain is Peptidyl-prolyl cis-trans isomerase-like 4 (cyp-6) from Neurospora crassa (strain ATCC 24698 / 74-OR23-1A / CBS 708.71 / DSM 1257 / FGSC 987).